Reading from the N-terminus, the 566-residue chain is Urease subunit beta (566 aa).

Residues 129 to 566 (GGIDTHIHFI…VPMARRYFMF (438 aa)) form the Urease domain. Ni(2+)-binding residues include His134, His136, and Lys217. Lys217 carries the post-translational modification N6-carboxylysine. A substrate-binding site is contributed by His219. Residues His246 and His272 each contribute to the Ni(2+) site. The Proton donor role is filled by His320. Asp360 is a Ni(2+) binding site.

It belongs to the metallo-dependent hydrolases superfamily. Urease alpha subunit family. Heterohexamer of 3 UreA (alpha) and 3 UreB (beta) subunits. It depends on Ni cation as a cofactor. Post-translationally, carboxylation allows a single lysine to coordinate two nickel ions.

The protein resides in the cytoplasm. It carries out the reaction urea + 2 H2O + H(+) = hydrogencarbonate + 2 NH4(+). Its pathway is nitrogen metabolism; urea degradation; CO(2) and NH(3) from urea (urease route): step 1/1. The protein is Urease subunit beta of Aliarcobacter butzleri (strain RM4018) (Arcobacter butzleri).